A 260-amino-acid polypeptide reads, in one-letter code: Triosephosphate isomerase (260 aa).

11–13 (NWK) serves as a coordination point for substrate. Histidine 103 serves as the catalytic Electrophile. Glutamate 175 (proton acceptor) is an active-site residue. Residues glycine 181, serine 220, and 241–242 (GG) contribute to the substrate site.

The protein belongs to the triosephosphate isomerase family. Homodimer.

The protein localises to the cytoplasm. It carries out the reaction D-glyceraldehyde 3-phosphate = dihydroxyacetone phosphate. The protein operates within carbohydrate biosynthesis; gluconeogenesis. It participates in carbohydrate degradation; glycolysis; D-glyceraldehyde 3-phosphate from glycerone phosphate: step 1/1. Its function is as follows. Involved in the gluconeogenesis. Catalyzes stereospecifically the conversion of dihydroxyacetone phosphate (DHAP) to D-glyceraldehyde-3-phosphate (G3P). This is Triosephosphate isomerase from Shewanella woodyi (strain ATCC 51908 / MS32).